A 342-amino-acid chain; its full sequence is Heparan sulfate glucosamine 3-O-sulfotransferase 6 (342 aa).

A disordered region spans residues 1-21 (MAGSGGLGGGAGGGQGAGAGQ). Over 1-31 (MAGSGGLGGGAGGGQGAGAGQGAALRASRAP) the chain is Cytoplasmic. Residues 32 to 49 (MLLVALVLGAYCLCALPG) traverse the membrane as a helical; Signal-anchor for type II membrane protein segment. Topologically, residues 50-342 (RCPPAARAPA…QMTGQDFGWG (293 aa)) are lumenal. The tract at residues 55–85 (ARAPAPAPAPSEPSSSVHRPGAPGLPLASGP) is disordered. A compositionally biased stretch (low complexity) spans 66–85 (EPSSSVHRPGAPGLPLASGP). A 3'-phosphoadenylyl sulfate-binding site is contributed by 100-104 (KGGTR). Substrate is bound by residues 122–128 (EPHFFDR) and 153–156 (KTPS). The 3'-phosphoadenylyl sulfate site is built by arginine 181 and serine 189. 220–221 (WS) contributes to the substrate binding site. The N-linked (GlcNAc...) asparagine glycan is linked to asparagine 281. Cysteine 288 and cysteine 300 form a disulfide bridge. 305 to 309 (KGRPH) lines the 3'-phosphoadenylyl sulfate pocket.

It belongs to the sulfotransferase 1 family.

It is found in the golgi apparatus membrane. It catalyses the reaction alpha-D-glucosaminyl-[heparan sulfate](n) + 3'-phosphoadenylyl sulfate = 3-sulfo-alpha-D-glucosaminyl-[heparan sulfate](n) + adenosine 3',5'-bisphosphate + H(+). Functionally, sulfotransferase that utilizes 3'-phospho-5'-adenylyl sulfate (PAPS) to catalyze the transfer of a sulfo group to heparan sulfate. The substrate-specific O-sulfation generates an enzyme-modified heparan sulfate which acts as a binding receptor to Herpes Simplex Virus-1 (HSV-1) and permits its entry. Unlike 3-OST-1, does not convert non-anticoagulant heparan sulfate to anticoagulant heparan sulfate. The chain is Heparan sulfate glucosamine 3-O-sulfotransferase 6 (HS3ST6) from Homo sapiens (Human).